A 230-amino-acid polypeptide reads, in one-letter code: 7-cyano-7-deazaguanine synthase (230 aa).

ATP is bound at residue 16–26 (LSGGLDSATVV). Zn(2+) contacts are provided by C195, C205, C208, and C211.

This sequence belongs to the QueC family. Zn(2+) is required as a cofactor.

It catalyses the reaction 7-carboxy-7-deazaguanine + NH4(+) + ATP = 7-cyano-7-deazaguanine + ADP + phosphate + H2O + H(+). The protein operates within purine metabolism; 7-cyano-7-deazaguanine biosynthesis. Catalyzes the ATP-dependent conversion of 7-carboxy-7-deazaguanine (CDG) to 7-cyano-7-deazaguanine (preQ(0)). The sequence is that of 7-cyano-7-deazaguanine synthase from Pseudomonas fluorescens (strain Pf0-1).